Here is a 312-residue protein sequence, read N- to C-terminus: Beta-ketoacyl-[acyl-carrier-protein] synthase III (312 aa).

Catalysis depends on residues Cys-112 and His-237. The ACP-binding stretch occupies residues 238–242 (QANIR). Asn-267 is a catalytic residue.

It belongs to the thiolase-like superfamily. FabH family. Homodimer.

The protein localises to the cytoplasm. It carries out the reaction malonyl-[ACP] + acetyl-CoA + H(+) = 3-oxobutanoyl-[ACP] + CO2 + CoA. It participates in lipid metabolism; fatty acid biosynthesis. Its function is as follows. Catalyzes the condensation reaction of fatty acid synthesis by the addition to an acyl acceptor of two carbons from malonyl-ACP. Catalyzes the first condensation reaction which initiates fatty acid synthesis and may therefore play a role in governing the total rate of fatty acid production. Possesses both acetoacetyl-ACP synthase and acetyl transacylase activities. Its substrate specificity determines the biosynthesis of branched-chain and/or straight-chain of fatty acids. This is Beta-ketoacyl-[acyl-carrier-protein] synthase III from Bacillus pumilus (strain SAFR-032).